The following is a 358-amino-acid chain: 3-isopropylmalate dehydrogenase 2 (358 aa).

Residue 74 to 87 coordinates NAD(+); that stretch reads GPKWDKLPAESRPE. Residues Arg94, Arg104, Arg132, and Asp221 each coordinate substrate. Positions 221, 245, and 249 each coordinate Mg(2+). 279–291 serves as a coordination point for NAD(+); that stretch reads GSAPDIAGQGVAN.

Belongs to the isocitrate and isopropylmalate dehydrogenases family. LeuB type 1 subfamily. Homodimer. It depends on Mg(2+) as a cofactor. Mn(2+) is required as a cofactor.

Its subcellular location is the cytoplasm. The catalysed reaction is (2R,3S)-3-isopropylmalate + NAD(+) = 4-methyl-2-oxopentanoate + CO2 + NADH. The protein operates within amino-acid biosynthesis; L-leucine biosynthesis; L-leucine from 3-methyl-2-oxobutanoate: step 3/4. In terms of biological role, catalyzes the oxidation of 3-carboxy-2-hydroxy-4-methylpentanoate (3-isopropylmalate) to 3-carboxy-4-methyl-2-oxopentanoate. The product decarboxylates to 4-methyl-2 oxopentanoate. This chain is 3-isopropylmalate dehydrogenase 2, found in Dechloromonas aromatica (strain RCB).